The following is a 1068-amino-acid chain: MTPTVPELEFAQATAFESNVPPLFPGRAGPDDGADRLRLRLAVRGWARPLDLIAASNSPDDVMAILGALAAEVETAVQTRPNQWYLSLAARKRELARRDDAQLRAAASASVPGDDDDPVLHAMRIALADAEPTLSALGTDVLAALGNACDWLGERWRHAVGAQRIAGELASRALDADLRRMTRDPMVGRSHRDTLARLIGFATAATQTPLSVAYVYGGGGAGKTTLLSFLQRDLSQRAEPVPVVRIDFDEPAIDPTRMVTLNIALVEQLARSVPAVCDRASDMLPALRDTALVQHDAGLSRGGPRKRIKSSRPESMLKAESVASQAASDEGSILYRLLAPDVVAGPILIVFDTAELVLAQSDHVASSLVSWLGFLHNEAGARDLRLVIAGRDPPDDPDLGHAANSLLSRLKDTGARIETPIGLPELDPAEAQQLLRNCGVDDPTAAAEAAAAVPGNPLLLRITADALLQGEAELRESVRRAHRDSRIDADSARNYLLRRVVAHVRDPIARPYVLAATYSPVVTAKLLEEVVIPAVDRSEREPGPGIPANKKAATAKAKRVFDALASTYWLTRQTLRSETVPFNREIRAFALKLLAATPEGALLERDVRQSAAIHHLRRRSADDRALALYHLAVLGHPYTVPRDLASVQTVLRDVIEELPADLRNRLAPPVGSVAPGVARGVARSSIDDMSDSDWQRYLEGDERSKRAGEGAQMVKADRAREALDLYLARPTRPPGLPPTFVIQAQADLGEWDEGIADIDAILEREADDWLARKSIGPEALSRIYWITRLALQAYGRLSTPHAMLLRNASETATGPGLSTLPALIAVAETMSGEPIMAGRMRSQALKTDAAGRTLLCPIHGHLPETIELFDAGIAVVQSDWRQRMIQLAPARLIRANEAHLRDLQSRLDALHAKPIAQVNQLFNKMRTGIAVEPTTMAGLNSAVLLLRGLTPEFYRPLREALLALCENGVASPMMRHAVDPLFERMSIRPAEMEPATFYRRLSNNPNAWCTAFIVYADRCRLLPGLCESLARYADSPKSRRIASSFLAWDKALCRGTSSDWGQPAKTRK.

Residue 217 to 224 (GGGGAGKT) participates in ATP binding.

Involved in defense against bacteriophages. When this probable 4 gene operon (bGSDM-FE772_23060-FE772_23065-FE772_23070) is inserted into E.coli it provides nearly 100-fold protection against phages T5 and T6 and about 8-fold against phage T4. The operon without bGSDM no longer protects against phage. Probably a nucleotide hydrolase, possibly of ATP. This chain is Probable ATPase FE772_23070, found in Lysobacter enzymogenes.